The sequence spans 750 residues: Cellulose synthase-like protein H1 (750 aa).

The next 2 helical transmembrane spans lie at 27–47 and 52–72; these read LAILFLLLALLLHRVLHDSGA and AALACEAWFTFMWLLNVNAKW. Catalysis depends on residues D137 and D459. The next 6 membrane-spanning stretches (helical) occupy residues 537–557, 570–590, 608–628, 664–684, 697–717, and 727–747; these read VWPVRAPFELCYALLGPYCLL, GFYIALALFIAYNTYMFMEFI, ITSASAWLLAFLTVILKTLGF, VFIPVTALAMLSVIAIAVGAW, GPGISEFISCGWLVLCFMPLL, and GIPWSIKMKACLLVAIFLLFC.

It belongs to the glycosyltransferase 2 family. Plant cellulose synthase-like H subfamily.

It localises to the golgi apparatus membrane. Thought to be a Golgi-localized beta-glycan synthase that polymerize the backbones of noncellulosic polysaccharides (hemicelluloses) of plant cell wall. In Oryza sativa subsp. japonica (Rice), this protein is Cellulose synthase-like protein H1 (CSLH1).